Reading from the N-terminus, the 130-residue chain is Anti-adapter protein IraD (130 aa).

Belongs to the GpW/Gp25 family. IraD subfamily. As to quaternary structure, interacts with RssB.

It is found in the cytoplasm. In terms of biological role, inhibits RpoS proteolysis by regulating RssB activity, thereby increasing the stability of the sigma stress factor RpoS during oxidative stress. Its effect on RpoS stability is due to its interaction with RssB, which probably blocks the interaction of RssB with RpoS, and the consequent delivery of the RssB-RpoS complex to the ClpXP protein degradation pathway. The polypeptide is Anti-adapter protein IraD (Escherichia coli O45:K1 (strain S88 / ExPEC)).